The following is a 2225-amino-acid chain: Multifunctional protein pyr1-3 (2225 aa).

An N-acetylmethionine modification is found at methionine 1. The tract at residues methionine 40–serine 390 is GATase (Glutamine amidotransferase). L-glutamine contacts are provided by serine 51, glycine 245, and glycine 247. Positions lysine 196–histidine 388 constitute a Glutamine amidotransferase type-1 domain. Residue cysteine 275 is the Nucleophile; for GATase activity of the active site. Residues glutamine 279, asparagine 317, glycine 319, and phenylalanine 320 each coordinate L-glutamine. Residues histidine 361 and glutamate 363 each act as for GATase activity in the active site. The tract at residues proline 391–asparagine 405 is linker. The segment at lysine 406–serine 948 is CPSase A. Residues lysine 406–valine 1461 are CPSase (Carbamoyl-phosphate synthase). Positions 526, 566, 572, 573, 603, 610, 636, 637, 638, 679, and 693 each coordinate ATP. 2 consecutive ATP-grasp domains span residues alanine 530–leucine 722 and serine 1069–isoleucine 1260. Mg(2+) contacts are provided by glutamine 679, glutamate 693, and asparagine 695. Residues glutamine 679, glutamate 693, and asparagine 695 each contribute to the Mn(2+) site. Residues tyrosine 949–valine 1461 are CPSase B. Residues arginine 1105, lysine 1144, isoleucine 1146, glutamate 1151, glycine 1176, valine 1177, histidine 1178, serine 1179, glutamine 1219, and glutamate 1231 each coordinate ATP. 3 residues coordinate Mg(2+): glutamine 1219, glutamate 1231, and asparagine 1233. Glutamine 1219, glutamate 1231, and asparagine 1233 together coordinate Mn(2+). In terms of domain architecture, MGS-like spans phenylalanine 1324–isoleucine 1470. The tract at residues tryptophan 1463–leucine 1797 is DHOase (dihydroorotase). Residues histidine 1479 and histidine 1481 each contribute to the Zn(2+) site. The (S)-dihydroorotate site is built by arginine 1483 and asparagine 1513. Residues lysine 1564, histidine 1599, cysteine 1622, histidine 1623, and glutamate 1646 each contribute to the Zn(2+) site. An N6-carboxylysine modification is found at lysine 1564. A (S)-dihydroorotate-binding site is contributed by arginine 1670. Residue aspartate 1695 coordinates Zn(2+). Aspartate 1695 acts as the For DHOase activity in catalysis. 2 residues coordinate (S)-dihydroorotate: histidine 1699 and proline 1711. The interval arginine 1798–serine 1916 is linker. Positions aspartate 1917–valine 2225 are ATCase (Aspartate transcarbamylase). Arginine 1974 and threonine 1975 together coordinate carbamoyl phosphate. L-aspartate is bound at residue lysine 2002. The carbamoyl phosphate site is built by arginine 2023, histidine 2051, and glutamine 2054. L-aspartate is bound by residues arginine 2084 and arginine 2145. Residues leucine 2184 and proline 2185 each contribute to the carbamoyl phosphate site.

The protein in the N-terminal section; belongs to the CarA family. In the 2nd section; belongs to the CarB family. It in the 3rd section; belongs to the metallo-dependent hydrolases superfamily. DHOase family. CAD subfamily. This sequence in the C-terminal section; belongs to the aspartate/ornithine carbamoyltransferase superfamily. ATCase family. As to quaternary structure, homohexamer. The cofactor is Mg(2+). Mn(2+) is required as a cofactor. Requires Zn(2+) as cofactor.

The protein localises to the cytoplasm. The enzyme catalyses hydrogencarbonate + L-glutamine + 2 ATP + H2O = carbamoyl phosphate + L-glutamate + 2 ADP + phosphate + 2 H(+). It catalyses the reaction L-glutamine + H2O = L-glutamate + NH4(+). The catalysed reaction is hydrogencarbonate + NH4(+) + 2 ATP = carbamoyl phosphate + 2 ADP + phosphate + 2 H(+). It carries out the reaction carbamoyl phosphate + L-aspartate = N-carbamoyl-L-aspartate + phosphate + H(+). The enzyme catalyses (S)-dihydroorotate + H2O = N-carbamoyl-L-aspartate + H(+). It participates in pyrimidine metabolism; UMP biosynthesis via de novo pathway; (S)-dihydroorotate from bicarbonate: step 1/3. Its pathway is pyrimidine metabolism; UMP biosynthesis via de novo pathway; (S)-dihydroorotate from bicarbonate: step 2/3. It functions in the pathway pyrimidine metabolism; UMP biosynthesis via de novo pathway; (S)-dihydroorotate from bicarbonate: step 3/3. With respect to regulation, allosterically regulated and controlled by phosphorylation. 5-phosphoribose 1-diphosphate is an activator while UMP is an inhibitor of the CPSase reaction. Multifunctional protein that encodes the first 3 enzymatic activities of the de novo pyrimidine pathway: carbamoylphosphate synthetase (CPSase; EC 6.3.5.5), aspartate transcarbamylase (ATCase; EC 2.1.3.2) and dihydroorotase (DHOase; EC 3.5.2.3). The CPSase-function is accomplished in 2 steps, by a glutamine-dependent amidotransferase activity (GATase) that binds and cleaves glutamine to produce ammonia, followed by an ammonium-dependent carbamoyl phosphate synthetase, which reacts with the ammonia, hydrogencarbonate and ATP to form carbamoyl phosphate. The endogenously produced carbamoyl phosphate is sequestered and channeled to the ATCase active site. ATCase then catalyzes the formation of carbamoyl-L-aspartate from L-aspartate and carbamoyl phosphate. In the last step, DHOase catalyzes the cyclization of carbamoyl aspartate to dihydroorotate. The polypeptide is Multifunctional protein pyr1-3 (pyr1-3) (Dictyostelium discoideum (Social amoeba)).